A 481-amino-acid polypeptide reads, in one-letter code: Glutamyl-tRNA(Gln) amidotransferase subunit A (481 aa).

Active-site charge relay system residues include lysine 74 and serine 149. The Acyl-ester intermediate role is filled by serine 173.

Belongs to the amidase family. GatA subfamily. In terms of assembly, heterotrimer of A, B and C subunits.

The enzyme catalyses L-glutamyl-tRNA(Gln) + L-glutamine + ATP + H2O = L-glutaminyl-tRNA(Gln) + L-glutamate + ADP + phosphate + H(+). Its function is as follows. Allows the formation of correctly charged Gln-tRNA(Gln) through the transamidation of misacylated Glu-tRNA(Gln) in organisms which lack glutaminyl-tRNA synthetase. The reaction takes place in the presence of glutamine and ATP through an activated gamma-phospho-Glu-tRNA(Gln). The sequence is that of Glutamyl-tRNA(Gln) amidotransferase subunit A from Francisella philomiragia subsp. philomiragia (strain ATCC 25017 / CCUG 19701 / FSC 153 / O#319-036).